The following is a 734-amino-acid chain: Photosystem I P700 chlorophyll a apoprotein A2 (734 aa).

A run of 8 helical transmembrane segments spans residues 46–69 (IFAS…FHVA), 135–158 (LYGG…LHLQ), 175–199 (LNHH…HVAI), 273–291 (MAHH…GHMY), 330–353 (LHFQ…QHMY), 369–395 (AALY…IFFI), 417–439 (AIIS…LYVH), and 517–535 (FLVH…LILV). The [4Fe-4S] cluster site is built by Cys559 and Cys568. A run of 2 helical transmembrane segments spans residues 575 to 596 (AFYL…YWHW) and 643 to 665 (LSVW…MFLI). The chlorophyll a site is built by His654, Met662, and Tyr670. Phylloquinone is bound at residue Trp671. A helical membrane pass occupies residues 707-727 (LVGLAHFSVGYIFTYAAFLIA).

It belongs to the PsaA/PsaB family. The PsaA/B heterodimer binds the P700 chlorophyll special pair and subsequent electron acceptors. PSI consists of a core antenna complex that captures photons, and an electron transfer chain that converts photonic excitation into a charge separation. The eukaryotic PSI reaction center is composed of at least 11 subunits. It depends on P700 is a chlorophyll a/chlorophyll a' dimer, A0 is one or more chlorophyll a, A1 is one or both phylloquinones and FX is a shared 4Fe-4S iron-sulfur center. as a cofactor.

It localises to the plastid. The protein resides in the chloroplast thylakoid membrane. It carries out the reaction reduced [plastocyanin] + hnu + oxidized [2Fe-2S]-[ferredoxin] = oxidized [plastocyanin] + reduced [2Fe-2S]-[ferredoxin]. Functionally, psaA and PsaB bind P700, the primary electron donor of photosystem I (PSI), as well as the electron acceptors A0, A1 and FX. PSI is a plastocyanin-ferredoxin oxidoreductase, converting photonic excitation into a charge separation, which transfers an electron from the donor P700 chlorophyll pair to the spectroscopically characterized acceptors A0, A1, FX, FA and FB in turn. Oxidized P700 is reduced on the lumenal side of the thylakoid membrane by plastocyanin. This is Photosystem I P700 chlorophyll a apoprotein A2 from Physcomitrium patens (Spreading-leaved earth moss).